The chain runs to 196 residues: MTHATDVLTLGRWMAADFSNQAQAFENPPFYAHIRVCMRPLPRGVLEGIALYVEQAYDYLLSVPYRTRVLELMPANDHIVIKNYVLKDEKRFFGAARDRQRLQAMTADDLELLCGCNMLTYWTGHSFRGEVEPGKACKVVRKGRETYLDSTFEIDGDRFISHDRGRDPETDEHVWGSVAGPFHFVRWQSFADEVMA.

Belongs to the CpcT/CpeT biliprotein lyase family.

Covalently attaches a chromophore to Cys residue(s) of phycobiliproteins. The sequence is that of Chromophore lyase CpcT/CpeT from Thermosynechococcus vestitus (strain NIES-2133 / IAM M-273 / BP-1).